Reading from the N-terminus, the 102-residue chain is Small ribosomal subunit protein uS10 (102 aa).

Belongs to the universal ribosomal protein uS10 family. As to quaternary structure, part of the 30S ribosomal subunit.

Involved in the binding of tRNA to the ribosomes. This is Small ribosomal subunit protein uS10 from Coprothermobacter proteolyticus (strain ATCC 35245 / DSM 5265 / OCM 4 / BT).